The chain runs to 287 residues: Nucleotide-binding protein Pmob_0154 (287 aa).

15–22 (GLSGAGKT) is a binding site for ATP. 64 to 67 (DIRW) serves as a coordination point for GTP.

This sequence belongs to the RapZ-like family.

In terms of biological role, displays ATPase and GTPase activities. In Petrotoga mobilis (strain DSM 10674 / SJ95), this protein is Nucleotide-binding protein Pmob_0154.